The primary structure comprises 205 residues: Holliday junction branch migration complex subunit RuvA (205 aa).

A domain I region spans residues 1-64; the sequence is MIGKLKGVID…EDMIRLYGFA (64 aa). The segment at 65–143 is domain II; sequence NQLEREWFRL…AFAGDASGTI (79 aa). A flexible linker region spans residues 144 to 152; the sequence is GLKQELGAG. Residues 153–205 form a domain III region; sequence AAPAPVADAVSALSNLGYSRDQAANAVAAALKEAGENADSAKLIRLGLKELSR.

This sequence belongs to the RuvA family. As to quaternary structure, homotetramer. Forms an RuvA(8)-RuvB(12)-Holliday junction (HJ) complex. HJ DNA is sandwiched between 2 RuvA tetramers; dsDNA enters through RuvA and exits via RuvB. An RuvB hexamer assembles on each DNA strand where it exits the tetramer. Each RuvB hexamer is contacted by two RuvA subunits (via domain III) on 2 adjacent RuvB subunits; this complex drives branch migration. In the full resolvosome a probable DNA-RuvA(4)-RuvB(12)-RuvC(2) complex forms which resolves the HJ.

It localises to the cytoplasm. Its function is as follows. The RuvA-RuvB-RuvC complex processes Holliday junction (HJ) DNA during genetic recombination and DNA repair, while the RuvA-RuvB complex plays an important role in the rescue of blocked DNA replication forks via replication fork reversal (RFR). RuvA specifically binds to HJ cruciform DNA, conferring on it an open structure. The RuvB hexamer acts as an ATP-dependent pump, pulling dsDNA into and through the RuvAB complex. HJ branch migration allows RuvC to scan DNA until it finds its consensus sequence, where it cleaves and resolves the cruciform DNA. In Brucella anthropi (strain ATCC 49188 / DSM 6882 / CCUG 24695 / JCM 21032 / LMG 3331 / NBRC 15819 / NCTC 12168 / Alc 37) (Ochrobactrum anthropi), this protein is Holliday junction branch migration complex subunit RuvA.